Reading from the N-terminus, the 106-residue chain is Iron-sulfur cluster assembly protein CyaY (106 aa).

It belongs to the frataxin family.

Its function is as follows. Involved in iron-sulfur (Fe-S) cluster assembly. May act as a regulator of Fe-S biogenesis. This chain is Iron-sulfur cluster assembly protein CyaY, found in Salmonella dublin (strain CT_02021853).